Consider the following 223-residue polypeptide: Cuticular glutathione peroxidase (223 aa).

A signal peptide spans 1–19 (MSAQLLILSHVVLLQLIVA). An N-linked (GlcNAc...) asparagine glycan is attached at N39. C74 is a catalytic residue. An N-linked (GlcNAc...) asparagine glycan is attached at N92.

Belongs to the glutathione peroxidase family. Homotetramer.

The protein localises to the secreted. The enzyme catalyses 2 glutathione + H2O2 = glutathione disulfide + 2 H2O. Could inhibit the oxidative burst of leukocytes and neutralize the secondary products of lipid peroxidation, thus providing the resistance of these parasites to immune effector mechanisms and their persistence in the mammalian host. It may also be involved in the formation of cross-linking residues such as dityrosine, trityrosine and isotrityrosine identified in cuticular collagen. Highly cross-linked external cortex may also serve to protect the parasite from immune attack. The sequence is that of Cuticular glutathione peroxidase from Wuchereria bancrofti.